The sequence spans 365 residues: Phospho-N-acetylmuramoyl-pentapeptide-transferase (365 aa).

A run of 10 helical transmembrane segments spans residues 22–42 (YISVRIIMISITSLLITLALG), 74–94 (TMGGVLILSSVIISCLLWGDL), 95–115 (TSIYLWILILVVIFFGAIGFF), 133–153 (YKFALQSIFSIVLAIVLFYLL), 168–188 (SLYIPMGIVIFVVLAFFIING), 201–221 (GLAIVPVVLVAAGLGIYAYIE), 240–260 (LAEVAVFCAAVCGSGLAFLWF), 267–287 (VFMGDVGSLTLGAVLGVIAVM), 292–312 (LIFFIMGLLFVVEALSVMLQV), and 342–362 (KVVIRFWIISLILFLIGLAAI).

The protein belongs to the glycosyltransferase 4 family. MraY subfamily. Requires Mg(2+) as cofactor.

The protein resides in the cell inner membrane. The catalysed reaction is UDP-N-acetyl-alpha-D-muramoyl-L-alanyl-gamma-D-glutamyl-meso-2,6-diaminopimeloyl-D-alanyl-D-alanine + di-trans,octa-cis-undecaprenyl phosphate = di-trans,octa-cis-undecaprenyl diphospho-N-acetyl-alpha-D-muramoyl-L-alanyl-D-glutamyl-meso-2,6-diaminopimeloyl-D-alanyl-D-alanine + UMP. It participates in cell wall biogenesis; peptidoglycan biosynthesis. Functionally, catalyzes the initial step of the lipid cycle reactions in the biosynthesis of the cell wall peptidoglycan: transfers peptidoglycan precursor phospho-MurNAc-pentapeptide from UDP-MurNAc-pentapeptide onto the lipid carrier undecaprenyl phosphate, yielding undecaprenyl-pyrophosphoryl-MurNAc-pentapeptide, known as lipid I. The sequence is that of Phospho-N-acetylmuramoyl-pentapeptide-transferase from Francisella tularensis subsp. tularensis (strain WY96-3418).